Reading from the N-terminus, the 354-residue chain is MDTPLRRSRRLEGLKPESPENPTSVLRVRRVLVEFESNPKETGEPRSPPGLGSPSRQPETSPGSPSLPNGPALGSPRKQPELDSGSPEGHRDPGLNFPQNQPESSPESHLLQPKPSEESPKFSQNQGEADSELPKSKEEPTPGCPRHQLQQDSGSLEPFPGQKAPGPEPSKPLQELTPRSPGSPRDQHEPSKPPAAGEPAREGPAPKKREGSSAQAPASKKPKEEIPVIPKGKPKSGRVWKDRSKKRFSQMVQDKPLRTSWQRKMKDRQERKLAKDFARHLEEEKERRRQEKKKRRAENLRRRLENERKAEIVQVIRNPAKLKRAKKKQLRSIEKRDTLAQLQKQPPQRPATKV.

The tract at residues 1–354 (MDTPLRRSRR…QPPQRPATKV (354 aa)) is disordered. 2 positions are modified to phosphoserine: S18 and S24. Positions 31–44 (VLVEFESNPKETGE) are enriched in basic and acidic residues. 2 positions are modified to phosphoserine: S47 and S53. Positions 49-58 (PGLGSPSRQP) are enriched in low complexity. At T60 the chain carries Phosphothreonine. 8 positions are modified to phosphoserine: S61, S64, S75, S86, S105, S108, S123, and S183. Over residues 97–107 (FPQNQPESSPE) the composition is skewed to polar residues. Residues 199–211 (PAREGPAPKKREG) are compositionally biased toward basic and acidic residues. Phosphoserine is present on residues S212 and S213. The segment covering 232–248 (GKPKSGRVWKDRSKKRF) has biased composition (basic residues). Basic and acidic residues-rich tracts occupy residues 267-289 (DRQE…ERRR) and 297-311 (AENL…RKAE). Residues 274–317 (AKDFARHLEEEKERRRQEKKKRRAENLRRRLENERKAEIVQVIR) adopt a coiled-coil conformation. Over residues 320–330 (AKLKRAKKKQL) the composition is skewed to basic residues. R336 is modified (citrulline).

Post-translationally, citrullinated by PADI4.

It is found in the nucleus. Its subcellular location is the chromosome. The protein localises to the nucleolus. In terms of biological role, required for proper chromosome segregation during mitosis and error-free mitotic progression. This is Coiled-coil domain-containing protein 86 from Bos taurus (Bovine).